A 442-amino-acid polypeptide reads, in one-letter code: tRNA-2-methylthio-N(6)-dimethylallyladenosine synthase (442 aa).

The MTTase N-terminal domain maps to 5 to 122 (KKVFIKTLGC…LPEMIKQKQK (118 aa)). Residues C14, C51, C85, C159, C163, and C166 each contribute to the [4Fe-4S] cluster site. Residues 145–378 (KAEGAKAYVS…DLLNSNAQII (234 aa)) enclose the Radical SAM core domain. Positions 380 to 442 (RQMVGTNQRI…LPNSLRGELI (63 aa)) constitute a TRAM domain.

The protein belongs to the methylthiotransferase family. MiaB subfamily. As to quaternary structure, monomer. [4Fe-4S] cluster serves as cofactor.

The protein resides in the cytoplasm. It carries out the reaction N(6)-dimethylallyladenosine(37) in tRNA + (sulfur carrier)-SH + AH2 + 2 S-adenosyl-L-methionine = 2-methylsulfanyl-N(6)-dimethylallyladenosine(37) in tRNA + (sulfur carrier)-H + 5'-deoxyadenosine + L-methionine + A + S-adenosyl-L-homocysteine + 2 H(+). Functionally, catalyzes the methylthiolation of N6-(dimethylallyl)adenosine (i(6)A), leading to the formation of 2-methylthio-N6-(dimethylallyl)adenosine (ms(2)i(6)A) at position 37 in tRNAs that read codons beginning with uridine. The polypeptide is tRNA-2-methylthio-N(6)-dimethylallyladenosine synthase (Francisella tularensis subsp. holarctica (strain LVS)).